The primary structure comprises 702 residues: Polyribonucleotide nucleotidyltransferase (702 aa).

Mg(2+) is bound by residues Asp487 and Asp493. The KH domain occupies 554–613; that stretch reads PKILTMQINPDKIRDVIGPSGKQINKIIEETGVKIDIEQDGTIFISSVNEEMNKKAKKII. Residues 623–691 enclose the S1 motif domain; sequence GQVYLGKVKR…KQGRVNLSRK (69 aa).

This sequence belongs to the polyribonucleotide nucleotidyltransferase family. Mg(2+) serves as cofactor.

It localises to the cytoplasm. The enzyme catalyses RNA(n+1) + phosphate = RNA(n) + a ribonucleoside 5'-diphosphate. In terms of biological role, involved in mRNA degradation. Catalyzes the phosphorolysis of single-stranded polyribonucleotides processively in the 3'- to 5'-direction. This chain is Polyribonucleotide nucleotidyltransferase, found in Anoxybacillus flavithermus (strain DSM 21510 / WK1).